The primary structure comprises 189 residues: MNLSATLILAFGMSMDAFAASIGKGASLHQPRFREALRTGLIFGVVEAITPIIGWGIGLFASQYIMEWDHWVAFSLLFILGMRMIVEGVRNRPDEVEKVKRHGFWLLVATAIATSLDAMAIGVGLAFLQVNIVHTAMAIGCATMIMATLGMMIGRFIGPLLGKRAEILGGVVLIGIGVNILLEHLGYLA.

Helical transmembrane passes span 3–23, 41–61, 65–85, 103–123, 132–152, and 167–187; these read LSAT…ASIG, LIFG…GLFA, IMEW…MRMI, GFWL…AIGV, IVHT…LGMM, and ILGG…HLGY.

Belongs to the MntP (TC 9.B.29) family.

It localises to the cell inner membrane. Its function is as follows. Probably functions as a manganese efflux pump. This is Putative manganese efflux pump MntP from Serratia proteamaculans (strain 568).